A 1011-amino-acid chain; its full sequence is Histone deacetylase 9 (1011 aa).

Ser22 is subject to Phosphoserine. The tract at residues 23-27 is interaction with CTBP1; it reads PLDLR. 3 disordered regions span residues 110–139, 183–249, and 262–304; these read RQEQEVERHRREQQLPPLRGKDRGRERAVA, TSLD…KDGN, and TESS…EQMV. The interaction with MEF2 stretch occupies residues 136-154; that stretch reads RAVASTEVKQKLQEFLLSK. The interval 175-343 is interaction with MAPK10; the sequence is LWYTAAHHTS…LPAVPSQLNA (169 aa). Positions 185–199 are enriched in polar residues; that stretch reads LDQSSPPLSGTSPSY. Over residues 208–219 the composition is skewed to basic and acidic residues; it reads DAKDDFPLRKTA. The segment at 218–261 is interaction with ETV6; the sequence is TASEPNLKVRSRLKQKVAERRSSPLLRRKDGNVVTSFKKRMFEV. Phosphoserine is present on residues Ser220 and Ser240. Residues 233-248 show a composition bias toward basic and acidic residues; sequence KVAERRSSPLLRRKDG. The span at 262 to 285 shows a compositional bias: low complexity; that stretch reads TESSVSSSSPGSGPSSPNNGPTGS. Ser451 is subject to Phosphoserine. Positions 494–536 are disordered; sequence QLKQPGSHLEEAEEELQGDQAMQEDRAPSSGNSTRSDSSACVD. A compositionally biased stretch (polar residues) spans 522–532; that stretch reads SSGNSTRSDSS. Ser554 is subject to Phosphoserine. Residues 631-978 form a histone deacetylase region; it reads SATGIAYDPL…VNALLGNELE (348 aa). Residues Cys646, Cys648, His654, and Cys731 each contribute to the Zn(2+) site. The active site involves His783.

Belongs to the histone deacetylase family. HD type 2 subfamily. As to quaternary structure, homodimer. Interacts with CTBP1. The phosphorylated form interacts with 14-3-3. Interacts with HDAC1 and HDAC3, and probably with HDAC4 and HDAC5. Interacts with MEF2, MAPK10, ETV6, NCOR1 and BCL6. Interacts with FOXP3 in the absence of T-cell stimulation. In terms of processing, phosphorylated on Ser-220 and Ser-450; which promotes 14-3-3-binding, impairs interaction with MEF2, and antagonizes antimyogenic activity. Phosphorylated on Ser-240; which impairs nuclear accumulation. Isoform 7 is phosphorylated on Tyr-1010. Phosphorylated by the PKC kinases PKN1 and PKN2, impairing nuclear import. Post-translationally, sumoylated. As to expression, broadly expressed, with highest levels in brain, heart, muscle and testis. Isoform 3 is present in human bladder carcinoma cells (at protein level).

It is found in the nucleus. The catalysed reaction is N(6)-acetyl-L-lysyl-[histone] + H2O = L-lysyl-[histone] + acetate. Inhibited by Trichostatin A (TSA) and suberoylanilide hydroxamic acid. In terms of biological role, responsible for the deacetylation of lysine residues on the N-terminal part of the core histones (H2A, H2B, H3 and H4). Histone deacetylation gives a tag for epigenetic repression and plays an important role in transcriptional regulation, cell cycle progression and developmental events. Represses MEF2-dependent transcription. Isoform 3 lacks active site residues and therefore is catalytically inactive. Represses MEF2-dependent transcription by recruiting HDAC1 and/or HDAC3. Seems to inhibit skeletal myogenesis and to be involved in heart development. Protects neurons from apoptosis, both by inhibiting JUN phosphorylation by MAPK10 and by repressing JUN transcription via HDAC1 recruitment to JUN promoter. The sequence is that of Histone deacetylase 9 (HDAC9) from Homo sapiens (Human).